Reading from the N-terminus, the 492-residue chain is RNA-binding protein Nova-2 (492 aa).

The short motif at 10–26 (KRPLETPPEVVCTKRSN) is the Bipartite nuclear localization signal element. A KH 1 domain is found at 32–99 (EYFLKVLIPS…EALNAVHSFI (68 aa)). K112 participates in a covalent cross-link: Glycyl lysine isopeptide (Lys-Gly) (interchain with G-Cter in SUMO2). 2 consecutive KH domains span residues 130 to 196 (AKQA…VSAI) and 406 to 473 (KELV…QYLI).

Interacts with PTBP2; the interaction is direct. Brain. Expression restricted to astrocytes.

It is found in the nucleus. Its function is as follows. Functions to regulate alternative splicing in neurons by binding pre-mRNA in a sequence-specific manner to activate exon inclusion or exclusion. It binds specifically to the sequences 5'-YCAY-3' and regulates splicing in only a subset of regulated exons. Binding to an exonic 5'-YCAY-3' cluster changes the protein complexes assembled on pre-mRNA, blocking U1 snRNP binding and exon inclusion, whereas binding to an intronic 5'-YCAY-3' cluster enhances spliceosome assembly and exon inclusion. With NOVA1, they perform unique biological functions in different brain areas and cell types. Uniquely regulates alternative splicing events of a series of axon guidance related genes during cortical development, being essential for central nervous system development by regulating neural networks wiring. Regulates differentially alternative splicing on the same transcripts expressed in different neurons. This includes functional differences in transcripts expressed in cortical and cerebellar excitatory versus inhibitory neurons where is required for, respectively, development of laminar structure and motor coordination and synapse formation. Also the regulation the regulation of intron retention can sequester the trans-acting splicing factor PTBP2, acting as a variable cis-acting scaffolding platform for PTBP2 across various natural conditions. The protein is RNA-binding protein Nova-2 of Homo sapiens (Human).